The chain runs to 225 residues: MENVLKNDWGPLLAPEFEKEYYRKLADFLKEEYSTHVVYPKKEDIFNALEYTSYENTKVVILGQDPYHGPNQAHGLSFSVQPGIKTPPSLLNMYKELRDEYGYDIPNNGYLVKWAEQGVLLLNTVLTVRQGEANSHKGKGWEHFTDRVIELLNEREKPVIFILWGRHAQAKKKLITNTKHHIIESVHPSPLSARRGFFGSKPYSKVNTILANMGEREIDWEIPNL.

Residue Asp65 is the Proton acceptor of the active site.

The protein belongs to the uracil-DNA glycosylase (UDG) superfamily. UNG family.

The protein localises to the cytoplasm. It carries out the reaction Hydrolyzes single-stranded DNA or mismatched double-stranded DNA and polynucleotides, releasing free uracil.. Functionally, excises uracil residues from the DNA which can arise as a result of misincorporation of dUMP residues by DNA polymerase or due to deamination of cytosine. In Bacillus cereus (strain AH187), this protein is Uracil-DNA glycosylase.